The sequence spans 427 residues: Glutamate-1-semialdehyde 2,1-aminomutase (427 aa).

At Lys267 the chain carries N6-(pyridoxal phosphate)lysine.

This sequence belongs to the class-III pyridoxal-phosphate-dependent aminotransferase family. HemL subfamily. In terms of assembly, homodimer. Requires pyridoxal 5'-phosphate as cofactor.

Its subcellular location is the cytoplasm. It catalyses the reaction (S)-4-amino-5-oxopentanoate = 5-aminolevulinate. It participates in porphyrin-containing compound metabolism; protoporphyrin-IX biosynthesis; 5-aminolevulinate from L-glutamyl-tRNA(Glu): step 2/2. The polypeptide is Glutamate-1-semialdehyde 2,1-aminomutase (Geobacter metallireducens (strain ATCC 53774 / DSM 7210 / GS-15)).